Reading from the N-terminus, the 496-residue chain is Germacrene A hydroxylase (496 aa).

The Cytoplasmic segment spans residues 1 to 2; that stretch reads ME. A helical; Signal-anchor for type II membrane protein transmembrane segment spans residues 3 to 23; the sequence is LTLTTSLGLAVFVFILFKLLT. Topologically, residues 24–496 are lumenal; sequence GSKSTKNSLP…TAYKTANNSA (473 aa). Heme is bound at residue C432. N-linked (GlcNAc...) asparagine glycosylation is present at N493.

This sequence belongs to the cytochrome P450 family. The cofactor is heme.

It localises to the endoplasmic reticulum membrane. It carries out the reaction (+)-(R)-germacrene A + 3 reduced [NADPH--hemoprotein reductase] + 3 O2 = germacra-1(10),4,11(13)-trien-12-oate + 3 oxidized [NADPH--hemoprotein reductase] + 4 H2O + 4 H(+). The protein operates within secondary metabolite biosynthesis; terpenoid biosynthesis. Functionally, involved in the biosynthesis of germacrene-derived sesquiterpene lactones. Catalyzes three consecutive oxidations of germacrene A to produce germacrene A acid. Could also catalyze the three-step oxidation of non-natural substrate amorphadiene to artemisinic acid. The protein is Germacrene A hydroxylase of Barnadesia spinosa (Spiny barnadesia).